The following is a 289-amino-acid chain: Acetyl-coenzyme A carboxylase carboxyl transferase subunit beta (289 aa).

A CoA carboxyltransferase N-terminal domain is found at 30–289 (IWRECPRCHS…SNAWRANHDK (260 aa)). Zn(2+) contacts are provided by cysteine 34, cysteine 37, cysteine 52, and cysteine 55. The C4-type zinc-finger motif lies at 34–55 (CPRCHSRFYYRRFGNFDVCPEC).

Belongs to the AccD/PCCB family. As to quaternary structure, acetyl-CoA carboxylase is a heterohexamer composed of biotin carboxyl carrier protein (AccB), biotin carboxylase (AccC) and two subunits each of ACCase subunit alpha (AccA) and ACCase subunit beta (AccD). It depends on Zn(2+) as a cofactor.

It is found in the cytoplasm. The catalysed reaction is N(6)-carboxybiotinyl-L-lysyl-[protein] + acetyl-CoA = N(6)-biotinyl-L-lysyl-[protein] + malonyl-CoA. The protein operates within lipid metabolism; malonyl-CoA biosynthesis; malonyl-CoA from acetyl-CoA: step 1/1. In terms of biological role, component of the acetyl coenzyme A carboxylase (ACC) complex. Biotin carboxylase (BC) catalyzes the carboxylation of biotin on its carrier protein (BCCP) and then the CO(2) group is transferred by the transcarboxylase to acetyl-CoA to form malonyl-CoA. This chain is Acetyl-coenzyme A carboxylase carboxyl transferase subunit beta, found in Oenococcus oeni (strain ATCC BAA-331 / PSU-1).